A 511-amino-acid chain; its full sequence is TNF receptor-associated factor family protein DDB_G0290931 (511 aa).

An RING-type; degenerate zinc finger spans residues 27 to 67 (CPICFELIYKKSIYQCSSGHYACQECWEKSLEIKQECMICR). Residues 103 to 169 (IDGANQENED…RKLIKDEENG (67 aa)) adopt a coiled-coil conformation. The segment at 107–159 (NQENEDEENEDEENEDDEDENEDEENGEDDEDKDEDEENENENEENKDEENEK) is disordered. A compositionally biased stretch (acidic residues) spans 109–155 (ENEDEENEDEENEDDEDENEDEENGEDDEDKDEDEENENENEENKDE). TRAF-type zinc fingers lie at residues 181–234 (RHIQ…QVQL) and 236–293 (NHYD…SELQ). Residues 324-358 (ELLLKEIEKSKITCSELQRKNDELSSLITEIDDNY) adopt a coiled-coil conformation. An MATH domain is found at 374–499 (GYTNKWIISN…DDKLTINIYV (126 aa)).

The protein belongs to the TNF receptor-associated factor family. A subfamily.

It is found in the cytoplasm. Functionally, probable adapter protein and signal transducer that links members of the tumor necrosis factor receptor family to different signaling pathways by association with the receptor cytoplasmic domain and kinases. The polypeptide is TNF receptor-associated factor family protein DDB_G0290931 (Dictyostelium discoideum (Social amoeba)).